Reading from the N-terminus, the 1294-residue chain is Phosphoribosylformylglycinamidine synthase (1294 aa).

The interval 303 to 325 is disordered; that stretch reads WPGAATGSGGEIRDEGATGRGSK. Residues 305-316, 384-386, and Ala676 contribute to the ATP site; these read GAATGSGGEIRD and TGY. The Mg(2+) site is built by Asp677, Glu716, Asn720, and Asp883. Ser885 is a binding site for ATP. The Glutamine amidotransferase type-1 domain maps to 1041–1294; the sequence is VAVLREQGVN…MFRNARRQLG (254 aa). The Nucleophile role is filled by Cys1134. Residues His1259 and Glu1261 contribute to the active site.

In the N-terminal section; belongs to the FGAMS family. Monomer.

Its subcellular location is the cytoplasm. It catalyses the reaction N(2)-formyl-N(1)-(5-phospho-beta-D-ribosyl)glycinamide + L-glutamine + ATP + H2O = 2-formamido-N(1)-(5-O-phospho-beta-D-ribosyl)acetamidine + L-glutamate + ADP + phosphate + H(+). The protein operates within purine metabolism; IMP biosynthesis via de novo pathway; 5-amino-1-(5-phospho-D-ribosyl)imidazole from N(2)-formyl-N(1)-(5-phospho-D-ribosyl)glycinamide: step 1/2. Phosphoribosylformylglycinamidine synthase involved in the purines biosynthetic pathway. Catalyzes the ATP-dependent conversion of formylglycinamide ribonucleotide (FGAR) and glutamine to yield formylglycinamidine ribonucleotide (FGAM) and glutamate. The chain is Phosphoribosylformylglycinamidine synthase from Pectobacterium atrosepticum (strain SCRI 1043 / ATCC BAA-672) (Erwinia carotovora subsp. atroseptica).